Here is a 203-residue protein sequence, read N- to C-terminus: Protein GrpE (203 aa).

A compositionally biased stretch (basic and acidic residues) spans Met-1–Gln-10. The interval Met-1 to Glu-20 is disordered.

The protein belongs to the GrpE family. In terms of assembly, homodimer.

Its subcellular location is the cytoplasm. Its function is as follows. Participates actively in the response to hyperosmotic and heat shock by preventing the aggregation of stress-denatured proteins, in association with DnaK and GrpE. It is the nucleotide exchange factor for DnaK and may function as a thermosensor. Unfolded proteins bind initially to DnaJ; upon interaction with the DnaJ-bound protein, DnaK hydrolyzes its bound ATP, resulting in the formation of a stable complex. GrpE releases ADP from DnaK; ATP binding to DnaK triggers the release of the substrate protein, thus completing the reaction cycle. Several rounds of ATP-dependent interactions between DnaJ, DnaK and GrpE are required for fully efficient folding. This is Protein GrpE from Shewanella sp. (strain MR-7).